The chain runs to 266 residues: Hydroxyethylthiazole kinase (266 aa).

Methionine 39 lines the substrate pocket. ATP contacts are provided by lysine 115 and threonine 160. Glycine 187 is a binding site for substrate.

Belongs to the Thz kinase family. Mg(2+) serves as cofactor.

The enzyme catalyses 5-(2-hydroxyethyl)-4-methylthiazole + ATP = 4-methyl-5-(2-phosphooxyethyl)-thiazole + ADP + H(+). Its pathway is cofactor biosynthesis; thiamine diphosphate biosynthesis; 4-methyl-5-(2-phosphoethyl)-thiazole from 5-(2-hydroxyethyl)-4-methylthiazole: step 1/1. Functionally, catalyzes the phosphorylation of the hydroxyl group of 4-methyl-5-beta-hydroxyethylthiazole (THZ). The protein is Hydroxyethylthiazole kinase of Staphylococcus aureus (strain MSSA476).